Reading from the N-terminus, the 506-residue chain is Alpha-ketoglutarate-dependent dioxygenase FTO (506 aa).

At Thr4 the chain carries Phosphothreonine. Residues 32-326 form a fe2OG dioxygenase domain region; that stretch reads TPKDDEFYQQ…SSTHRVAECS (295 aa). Residues Arg96 and Tyr108 each contribute to the substrate site. Asn204 serves as a coordination point for 2-oxoglutarate. A loop L1; predicted to block binding of double-stranded DNA or RNA region spans residues 212-223; the sequence is PYLKEEPYFGMG. Residue Lys215 is modified to N6-acetyllysine. Fe cation-binding residues include His230 and Asp232. Position 230–233 (230–233) interacts with substrate; that stretch reads HHDE. Tyr294 lines the 2-oxoglutarate pocket. His306 contributes to the Fe cation binding site. Residues 315–317, Thr319, and Arg321 contribute to the 2-oxoglutarate site; that span reads RFS.

It belongs to the fto family. Monomer. May also exist as homodimer. The cofactor is Fe(2+).

Its subcellular location is the nucleus. It localises to the nucleus speckle. The protein resides in the cytoplasm. It carries out the reaction a 5'-end (N(7)-methyl 5'-triphosphoguanosine)-(N(6),2'-O-dimethyladenosine) in mRNA + 2-oxoglutarate + O2 = a 5'-end (N(7)-methyl 5'-triphosphoguanosine)-(2'-O-methyladenosine) in mRNA + formaldehyde + succinate + CO2. The catalysed reaction is an N(6)-methyladenosine in mRNA + 2-oxoglutarate + O2 = an adenosine in mRNA + formaldehyde + succinate + CO2. The enzyme catalyses N(6)-methyladenosine in U6 snRNA + 2-oxoglutarate + O2 = adenosine in U6 snRNA + formaldehyde + succinate + CO2. It catalyses the reaction a 5'-end (N(7)-methyl 5'-triphosphoguanosine)-(N(6),2'-O-dimethyladenosine) in U6 snRNA + 2-oxoglutarate + O2 = a 5'-end (N(7)-methyl 5'-triphosphoguanosine)-(2'-O-methyladenosine) in U6 snRNA + formaldehyde + succinate + CO2. It carries out the reaction an N(1)-methyladenosine in tRNA + 2-oxoglutarate + O2 = an adenosine in tRNA + formaldehyde + succinate + CO2. In terms of biological role, RNA demethylase that mediates oxidative demethylation of different RNA species, such as mRNAs, tRNAs and snRNAs, and acts as a regulator of fat mass, adipogenesis and energy homeostasis. Specifically demethylates N(6)-methyladenosine (m6A) RNA, the most prevalent internal modification of messenger RNA (mRNA) in higher eukaryotes. M6A demethylation by FTO affects mRNA expression and stability. Also able to demethylate m6A in U6 small nuclear RNA (snRNA). Mediates demethylation of N(6),2'-O-dimethyladenosine cap (m6A(m)), by demethylating the N(6)-methyladenosine at the second transcribed position of mRNAs and U6 snRNA. Demethylation of m6A(m) in the 5'-cap by FTO affects mRNA stability by promoting susceptibility to decapping. Also acts as a tRNA demethylase by removing N(1)-methyladenine from various tRNAs. Has no activity towards 1-methylguanine. Has no detectable activity towards double-stranded DNA. Also able to repair alkylated DNA and RNA by oxidative demethylation: demethylates single-stranded RNA containing 3-methyluracil, single-stranded DNA containing 3-methylthymine and has low demethylase activity towards single-stranded DNA containing 1-methyladenine or 3-methylcytosine. Ability to repair alkylated DNA and RNA is however unsure in vivo. Involved in the regulation of fat mass, adipogenesis and body weight, thereby contributing to the regulation of body size and body fat accumulation. Involved in the regulation of thermogenesis and the control of adipocyte differentiation into brown or white fat cells. Regulates activity of the dopaminergic midbrain circuitry via its ability to demethylate m6A in mRNAs. Plays an oncogenic role in a number of acute myeloid leukemias by enhancing leukemic oncogene-mediated cell transformation: acts by mediating m6A demethylation of target transcripts such as MYC, CEBPA, ASB2 and RARA, leading to promote their expression. This chain is Alpha-ketoglutarate-dependent dioxygenase FTO (FTO), found in Canis lupus familiaris (Dog).